Here is a 205-residue protein sequence, read N- to C-terminus: Large ribosomal subunit protein uL18 (205 aa).

The protein belongs to the universal ribosomal protein uL18 family. In terms of assembly, part of the 50S ribosomal subunit. Contacts the 5S and 23S rRNAs.

Its function is as follows. This is one of the proteins that bind and probably mediate the attachment of the 5S RNA into the large ribosomal subunit, where it forms part of the central protuberance. The sequence is that of Large ribosomal subunit protein uL18 from Pyrobaculum neutrophilum (strain DSM 2338 / JCM 9278 / NBRC 100436 / V24Sta) (Thermoproteus neutrophilus).